Consider the following 328-residue polypeptide: dITP/XTP pyrophosphatase (328 aa).

The segment at 1-129 is unknown; that stretch reads MSEKIYEYKD…ATSEQGFGDI (129 aa). The NTP pyrophosphatase stretch occupies residues 130-324; it reads ILIATRNEGK…KLMEVFPAWQ (195 aa). 134-139 is a binding site for substrate; that stretch reads TRNEGK. Catalysis depends on aspartate 196, which acts as the Proton acceptor. Aspartate 196 is a binding site for Mg(2+). Substrate contacts are provided by residues serine 197, 280–283, lysine 303, and 308–309; these read FGYD and HR.

The protein belongs to the HAM1 NTPase family. Homodimer. Mg(2+) serves as cofactor.

The catalysed reaction is XTP + H2O = XMP + diphosphate + H(+). The enzyme catalyses dITP + H2O = dIMP + diphosphate + H(+). It carries out the reaction ITP + H2O = IMP + diphosphate + H(+). Pyrophosphatase that catalyzes the hydrolysis of nucleoside triphosphates to their monophosphate derivatives, with a high preference for the non-canonical purine nucleotides XTP (xanthosine triphosphate), dITP (deoxyinosine triphosphate) and ITP. Seems to function as a house-cleaning enzyme that removes non-canonical purine nucleotides from the nucleotide pool, thus preventing their incorporation into DNA/RNA and avoiding chromosomal lesions. The chain is dITP/XTP pyrophosphatase from Streptococcus pyogenes serotype M1.